A 310-amino-acid polypeptide reads, in one-letter code: ADP-L-glycero-D-manno-heptose-6-epimerase (310 aa).

Residues 10–11 (FI), 31–32 (DN), K38, K53, 75–79 (EGACS), and N92 each bind NADP(+). Residue Y140 is the Proton acceptor of the active site. K144 is a binding site for NADP(+). N169 serves as a coordination point for substrate. NADP(+) contacts are provided by V170 and K178. Catalysis depends on K178, which acts as the Proton acceptor. Substrate contacts are provided by residues S180, H187, 201 to 204 (FEGS), R209, and Y272.

This sequence belongs to the NAD(P)-dependent epimerase/dehydratase family. HldD subfamily. As to quaternary structure, homopentamer. NADP(+) is required as a cofactor.

It carries out the reaction ADP-D-glycero-beta-D-manno-heptose = ADP-L-glycero-beta-D-manno-heptose. Its pathway is nucleotide-sugar biosynthesis; ADP-L-glycero-beta-D-manno-heptose biosynthesis; ADP-L-glycero-beta-D-manno-heptose from D-glycero-beta-D-manno-heptose 7-phosphate: step 4/4. Catalyzes the interconversion between ADP-D-glycero-beta-D-manno-heptose and ADP-L-glycero-beta-D-manno-heptose via an epimerization at carbon 6 of the heptose. The sequence is that of ADP-L-glycero-D-manno-heptose-6-epimerase from Salmonella paratyphi C (strain RKS4594).